A 296-amino-acid chain; its full sequence is MPNLKDLKNRIASVKSTRKITKAMQMVAAAKLRRAQEAAEMARPYAEKMEAVMSGLASAVGNSEGAPRLLAGNGKDQVHLLVVMTAERGLCGGFNSTIVRKARVHAQKLLGEGKTIKILTVGKKGREQLRRDYADHLIGHVDLSDVKRLGYADAASIATDVLNRFEEDEFDVATIFFNRFESVISQIPTATQIIPAVFEDVEEADDTSKDSGTLYEYEPSEEAVLEDLLPRGIATQIFTALLENGASEQGARMSAMDNATRNAGDMIDRLTIEYNRSRQAVITSELIEIISGAEAL.

The protein belongs to the ATPase gamma chain family. As to quaternary structure, F-type ATPases have 2 components, CF(1) - the catalytic core - and CF(0) - the membrane proton channel. CF(1) has five subunits: alpha(3), beta(3), gamma(1), delta(1), epsilon(1). CF(0) has three main subunits: a, b and c.

The protein resides in the cell inner membrane. Functionally, produces ATP from ADP in the presence of a proton gradient across the membrane. The gamma chain is believed to be important in regulating ATPase activity and the flow of protons through the CF(0) complex. This chain is ATP synthase gamma chain, found in Jannaschia sp. (strain CCS1).